The primary structure comprises 661 residues: uncharacterized protein (661 aa).

Transmembrane regions (helical) follow at residues 37 to 57, 87 to 107, 120 to 140, 158 to 178, 243 to 263, 266 to 286, and 341 to 361; these read VFLGLILALMVVVVALTLFLS, INSPAPWIGLVALAMAGAVFI, WLLLGVLLSLLFVVNGLNVIL, VFWQFLWIYGIVIVVAIPIIV, LLDILDSILTLISFTAILYTI, TLMWGLIGYAVFGTVVAIAIG, and FNLLIIWQALISLFQLGYNYF. The 288-residue stretch at 123-410 folds into the ABC transmembrane type-1 domain; sequence LGVLLSLLFV…VTNQIQNITE (288 aa). Residues 453-659 form the ABC transporter domain; that stretch reads VALENVTLSP…AEGRWQISPI (207 aa). 487–494 is a binding site for ATP; it reads GPSGSGKS.

It belongs to the ABC transporter superfamily.

The protein resides in the cell inner membrane. This is an uncharacterized protein from Synechocystis sp. (strain ATCC 27184 / PCC 6803 / Kazusa).